Consider the following 491-residue polypeptide: Transcription factor AP-2-alpha (491 aa).

Residues 74-161 (GASNGTARLP…GQRQSQESGL (88 aa)) are disordered. The short motif at 111 to 116 (YFPPPY) is the PPxY motif element. 2 stretches are compositionally biased toward low complexity: residues 119–128 (IYPQSQDPYS) and 142–155 (QPQP…GQRQ). Glycyl lysine isopeptide (Lys-Gly) (interchain with G-Cter in SUMO2) cross-links involve residues Lys231 and Lys238. At Ser293 the chain carries Phosphoserine; by PKA. The H-S-H (helix-span-helix), dimerization stretch occupies residues 334-464 (RRKAANVTLL…YLTEALKAMD (131 aa)). Residues 468–481 (LSNNPNSHTDNSAK) show a composition bias toward polar residues. The interval 468 to 491 (LSNNPNSHTDNSAKSSDKEEKHRK) is disordered. Basic and acidic residues predominate over residues 482-491 (SSDKEEKHRK).

It belongs to the AP-2 family. As to quaternary structure, binds DNA as a dimer. Can form homodimers or heterodimers with other AP-2 family members. Interacts with WWOX. Interacts with CITED4. Interacts with UBE2I. Interacts with RALBP1 in a complex also containing EPN1 and NUMB during interphase and mitosis. Interacts with KCTD1; this interaction represses transcription activation. Interacts (via C-terminus) with CITED2 (via C-terminus); the interaction stimulates TFAP2A-transcriptional activation. Interacts (via N-terminus) with EP300 (via N-terminus); the interaction requires CITED2. Interacts with KCTD15; this interaction inhibits TFAP2A transcriptional activation.

It is found in the nucleus. In terms of biological role, sequence-specific DNA-binding protein that interacts with inducible viral and cellular enhancer elements to regulate transcription of selected genes. AP-2 factors bind to the consensus sequence 5'-GCCNNNGGC-3' and activate genes involved in a large spectrum of important biological functions including proper eye, face, body wall, limb and neural tube development. They also suppress a number of genes including MCAM/MUC18, C/EBP alpha and MYC. AP-2-alpha is the only AP-2 protein required for early morphogenesis of the lens vesicle. Together with the CITED2 coactivator, stimulates the PITX2 P1 promoter transcription activation. Associates with chromatin to the PITX2 P1 promoter region. This chain is Transcription factor AP-2-alpha (TFAP2A), found in Ovis aries (Sheep).